We begin with the raw amino-acid sequence, 311 residues long: tRNA-cytidine(32) 2-sulfurtransferase (311 aa).

The PP-loop motif signature appears at 47–52; the sequence is SGGKDS. The [4Fe-4S] cluster site is built by cysteine 122, cysteine 125, and cysteine 213.

Belongs to the TtcA family. In terms of assembly, homodimer. Requires Mg(2+) as cofactor. [4Fe-4S] cluster is required as a cofactor.

It is found in the cytoplasm. It carries out the reaction cytidine(32) in tRNA + S-sulfanyl-L-cysteinyl-[cysteine desulfurase] + AH2 + ATP = 2-thiocytidine(32) in tRNA + L-cysteinyl-[cysteine desulfurase] + A + AMP + diphosphate + H(+). It participates in tRNA modification. Catalyzes the ATP-dependent 2-thiolation of cytidine in position 32 of tRNA, to form 2-thiocytidine (s(2)C32). The sulfur atoms are provided by the cysteine/cysteine desulfurase (IscS) system. This Shigella boydii serotype 4 (strain Sb227) protein is tRNA-cytidine(32) 2-sulfurtransferase.